Reading from the N-terminus, the 449-residue chain is MTIPELPILWRDNAPPSEYEAWRSRTFNSKRPDAQPLAIIKPTTIDHIVSATALAKENNAKLALRSGGHSLQCWSLRKDSILVDLENFRYLEFDDATGVVSVTPSVTSSELLLFLANKKRFFPSGHSGEVGLGGFLLQGGIGLNARSYGYACEYLTAVDVVTVSGEVKHCSPDENADLFWAARGAGPEFPAIVTRFHLNTRPLLPTVKRCTYIWPAVCYEMVFKWVLEILPTLSDDIEPTIFGFTLPNTPIPVIAFHAHVHAESDESAIELLKPLHESHPAGAMVEQDCVDTSVQQEFESGHAIMPPGARYFTDSVFLTPGTDIIEACREMFTTLPAQAAGSIAYWEPMKQRTKLPEMAWSIHSEHYVSLMAIYGDQNQDHKQQTWILDCFKDMDRKGLLLGTYVGDAHPKDRPHHYWSDPAKERIQKIGVQWDPEARLRGTIFAENTL.

Residues 32-203 (PDAQPLAIIK…TRFHLNTRPL (172 aa)) enclose the FAD-binding PCMH-type domain.

It belongs to the oxygen-dependent FAD-linked oxidoreductase family. FAD serves as cofactor.

Its pathway is secondary metabolite biosynthesis. Its function is as follows. FAD-linked oxidoreductase; part of the gene cluster that mediates the biosynthesis of the indole diterpenes janthitremanes such as shearinine K or shearinine A. The geranylgeranyl diphosphate (GGPP) synthase janG catalyzes the first step in janthitremane biosynthesis via conversion of farnesyl pyrophosphate and isopentyl pyrophosphate into geranylgeranyl pyrophosphate (GGPP). Condensation of indole-3-glycerol phosphate with GGPP by the prenyl transferase janC then forms 3-geranylgeranylindole (3-GGI). Epoxidation by the FAD-dependent monooxygenase janM leads to a epoxidized-GGI that is substrate of the terpene cyclase janB for cyclization to yield paspaline. Paspaline is subsequently converted to 13-desoxypaspaline by the cytochrome P450 monooxygenase janP, via beta-PC-M6 in a series of alpha-face oxidations. The cytochrome P450 monooxygenase janQ is proposed to carry out sequential beta-face oxidation steps at C-7 and C-13 of 13-desoxypaspaline to form paspalicine and paspalinine respectively. The indole diterpene prenyltransferase janD may then convert paspalinine into shearinine K which is substrate of janO and/or additional enzymes for oxidation and cyclization to generate shearinine A. This is FAD-linked oxidoreductase janO from Penicillium janthinellum (Penicillium vitale).